A 57-amino-acid polypeptide reads, in one-letter code: Small ribosomal subunit protein bS21 (57 aa).

A disordered region spans residues 22–57; the sequence is QCSKSGVLSEAKKRKHYEKPSEKRKRKATEKRNSRK. The span at 33 to 57 shows a compositional bias: basic residues; sequence KKRKHYEKPSEKRKRKATEKRNSRK.

This sequence belongs to the bacterial ribosomal protein bS21 family.

This chain is Small ribosomal subunit protein bS21, found in Natranaerobius thermophilus (strain ATCC BAA-1301 / DSM 18059 / JW/NM-WN-LF).